Consider the following 118-residue polypeptide: UPF0102 protein ROP_66030 (118 aa).

The protein belongs to the UPF0102 family.

The chain is UPF0102 protein ROP_66030 from Rhodococcus opacus (strain B4).